A 159-amino-acid chain; its full sequence is Cytochrome P450 monooxygenase aunB (159 aa).

A heme-binding site is contributed by cysteine 134.

Belongs to the cytochrome P450 family. Heme is required as a cofactor.

The catalysed reaction is 2 fonsecin B + NADPH + O2 + H(+) = aurasperone B + NADP(+) + 2 H2O. It carries out the reaction 2 rubrofusarin B + NADPH + O2 + H(+) = aurasperone A + NADP(+) + 2 H2O. The protein operates within secondary metabolite biosynthesis. In terms of biological role, cytochrome P450 monooxygenase; part of the gene cluster that mediates the biosynthesis of aurasperone B, a dimeric gamma-naphthopyrone. The first step in the biosynthesis of aurasperone B is the production of gamma-naphthopyrone precursor YWA1 by the non-reducing polyketide synthase albA, via condensation of one acetyl-CoA starter unit with 6 malonyl-CoA units. YWA1 is then methylated by aunE at position C-6 to yield foncesin which is further methylated at position C-8 by aunD to produce fonsecin B. A key enzyme in the biosynthetic pathway is the cytochrome P450 monooxygenase aunB which catalyzes the oxidative dimerization of fonsecin B to aurasperone B. AunB also catalyzes the oxidative dimerization of rubrofusarin B into aurasperone A. This chain is Cytochrome P450 monooxygenase aunB, found in Aspergillus niger (strain ATCC 1015 / CBS 113.46 / FGSC A1144 / LSHB Ac4 / NCTC 3858a / NRRL 328 / USDA 3528.7).